A 329-amino-acid polypeptide reads, in one-letter code: 4-hydroxythreonine-4-phosphate dehydrogenase (329 aa).

The substrate site is built by His-136 and Thr-137. Positions 166, 211, and 266 each coordinate a divalent metal cation. Residues Lys-274, Asn-283, and Arg-292 each contribute to the substrate site.

The protein belongs to the PdxA family. As to quaternary structure, homodimer. The cofactor is Zn(2+). It depends on Mg(2+) as a cofactor. Co(2+) is required as a cofactor.

The protein resides in the cytoplasm. The catalysed reaction is 4-(phosphooxy)-L-threonine + NAD(+) = 3-amino-2-oxopropyl phosphate + CO2 + NADH. It participates in cofactor biosynthesis; pyridoxine 5'-phosphate biosynthesis; pyridoxine 5'-phosphate from D-erythrose 4-phosphate: step 4/5. In terms of biological role, catalyzes the NAD(P)-dependent oxidation of 4-(phosphooxy)-L-threonine (HTP) into 2-amino-3-oxo-4-(phosphooxy)butyric acid which spontaneously decarboxylates to form 3-amino-2-oxopropyl phosphate (AHAP). This chain is 4-hydroxythreonine-4-phosphate dehydrogenase, found in Escherichia coli (strain SE11).